Consider the following 274-residue polypeptide: WIMGHMVNAIEQVDEFLNLGANAIEFDIDFDKDGIAQITHHGIPCDCGRKCTKKAIFTEYLDNIRQVTTPDDPKLREQLVLLALDLKLQRISSAKAYRAGEDVAKKLLDHYWQRGNSRARAYILLNIPLVEDYEFIRAFKDTLKNEGYESYNDKVGINFTGNEDLDKIRDVLEILGIHKQVWQADGITSCFARGTERLKEALEKRDTPGYSYINKVYAWTLVRKSIMRRSLRLGVDGVMSNNPDRVIKVLKEKEFADKFRLATYNDNPWEKFRG.

Residue H5 is part of the active site. Residues E25 and D27 each coordinate Mg(2+). H41 serves as the catalytic Nucleophile. Disulfide bonds link C45–C51 and C47–C190. Mg(2+) is bound at residue D85.

The protein belongs to the arthropod phospholipase D family. Class II subfamily. The cofactor is Mg(2+). As to expression, expressed by the venom gland.

The protein localises to the secreted. The enzyme catalyses an N-(acyl)-sphingosylphosphocholine = an N-(acyl)-sphingosyl-1,3-cyclic phosphate + choline. It carries out the reaction an N-(acyl)-sphingosylphosphoethanolamine = an N-(acyl)-sphingosyl-1,3-cyclic phosphate + ethanolamine. The catalysed reaction is a 1-acyl-sn-glycero-3-phosphocholine = a 1-acyl-sn-glycero-2,3-cyclic phosphate + choline. It catalyses the reaction a 1-acyl-sn-glycero-3-phosphoethanolamine = a 1-acyl-sn-glycero-2,3-cyclic phosphate + ethanolamine. Dermonecrotic toxins cleave the phosphodiester linkage between the phosphate and headgroup of certain phospholipids (sphingolipid and lysolipid substrates), forming an alcohol (often choline) and a cyclic phosphate. This toxin acts on sphingomyelin (SM). It may also act on ceramide phosphoethanolamine (CPE), lysophosphatidylcholine (LPC) and lysophosphatidylethanolamine (LPE), but not on lysophosphatidylserine (LPS), and lysophosphatidylglycerol (LPG). It acts by transphosphatidylation, releasing exclusively cyclic phosphate products as second products. Induces dermonecrosis, hemolysis, increased vascular permeability, edema, inflammatory response, and platelet aggregation. The polypeptide is Dermonecrotic toxin SdSicTox-betaIIB1bxiii (Sicarius cf. damarensis (strain GJB-2008) (Six-eyed sand spider)).